The primary structure comprises 455 residues: Probable 1,4-beta-D-glucan cellobiohydrolase A (455 aa).

The signal sequence occupies residues 1–17; it reads MHQRALLFSAFWTAVQA. An N-linked (GlcNAc...) asparagine glycan is attached at N81. The active-site Nucleophile is E227. E232 functions as the Proton donor in the catalytic mechanism. N285 carries an N-linked (GlcNAc...) asparagine glycan.

This sequence belongs to the glycosyl hydrolase 7 (cellulase C) family.

It localises to the secreted. It catalyses the reaction Hydrolysis of (1-&gt;4)-beta-D-glucosidic linkages in cellulose and cellotetraose, releasing cellobiose from the non-reducing ends of the chains.. Functionally, the biological conversion of cellulose to glucose generally requires three types of hydrolytic enzymes: (1) Endoglucanases which cut internal beta-1,4-glucosidic bonds; (2) Exocellobiohydrolases that cut the disaccharide cellobiose from the non-reducing end of the cellulose polymer chain; (3) Beta-1,4-glucosidases which hydrolyze the cellobiose and other short cello-oligosaccharides to glucose. The chain is Probable 1,4-beta-D-glucan cellobiohydrolase A (cbhA) from Aspergillus flavus (strain ATCC 200026 / FGSC A1120 / IAM 13836 / NRRL 3357 / JCM 12722 / SRRC 167).